The chain runs to 524 residues: Phosphoenolpyruvate carboxykinase (ATP) (524 aa).

Residues Arg-52, Tyr-188, and Lys-194 each coordinate substrate. ATP is bound by residues Lys-194, His-213, and Gly-229–Thr-237. Mn(2+)-binding residues include Lys-194 and His-213. Asp-250 contacts Mn(2+). 3 residues coordinate ATP: Glu-278, Arg-314, and Thr-439. Position 314 (Arg-314) interacts with substrate.

The protein belongs to the phosphoenolpyruvate carboxykinase (ATP) family. Requires Mn(2+) as cofactor.

The protein resides in the cytoplasm. It carries out the reaction oxaloacetate + ATP = phosphoenolpyruvate + ADP + CO2. Its pathway is carbohydrate biosynthesis; gluconeogenesis. In terms of biological role, involved in the gluconeogenesis. Catalyzes the conversion of oxaloacetate (OAA) to phosphoenolpyruvate (PEP) through direct phosphoryl transfer between the nucleoside triphosphate and OAA. This Campylobacter jejuni subsp. doylei (strain ATCC BAA-1458 / RM4099 / 269.97) protein is Phosphoenolpyruvate carboxykinase (ATP).